The primary structure comprises 838 residues: Probable beta-glucosidase K (838 aa).

Residue asparagine 19 is glycosylated (N-linked (GlcNAc...) asparagine). Aspartate 232 is an active-site residue. Residues asparagine 324 and asparagine 489 are each glycosylated (N-linked (GlcNAc...) asparagine). Residues 405-564 form the PA14 domain; sequence EGQPGLRMRF…DPELAIARAV (160 aa).

The protein belongs to the glycosyl hydrolase 3 family.

Its subcellular location is the secreted. The catalysed reaction is Hydrolysis of terminal, non-reducing beta-D-glucosyl residues with release of beta-D-glucose.. The protein operates within glycan metabolism; cellulose degradation. Functionally, beta-glucosidases are one of a number of cellulolytic enzymes involved in the degradation of cellulosic biomass. Catalyzes the last step releasing glucose from the inhibitory cellobiose. This is Probable beta-glucosidase K (bglK) from Emericella nidulans (strain FGSC A4 / ATCC 38163 / CBS 112.46 / NRRL 194 / M139) (Aspergillus nidulans).